Reading from the N-terminus, the 183-residue chain is Hypoxanthine/guanine phosphoribosyltransferase (183 aa).

Belongs to the purine/pyrimidine phosphoribosyltransferase family. Archaeal HPRT subfamily. As to quaternary structure, homodimer.

The protein resides in the cytoplasm. The catalysed reaction is IMP + diphosphate = hypoxanthine + 5-phospho-alpha-D-ribose 1-diphosphate. It catalyses the reaction GMP + diphosphate = guanine + 5-phospho-alpha-D-ribose 1-diphosphate. Its pathway is purine metabolism; IMP biosynthesis via salvage pathway; IMP from hypoxanthine: step 1/1. Functionally, catalyzes a salvage reaction resulting in the formation of IMP that is energically less costly than de novo synthesis. The chain is Hypoxanthine/guanine phosphoribosyltransferase from Methanocaldococcus infernus (strain DSM 11812 / JCM 15783 / ME).